We begin with the raw amino-acid sequence, 490 residues long: Cytochrome P450 2C9 (490 aa).

A heme-binding site is contributed by C435.

The protein belongs to the cytochrome P450 family. The cofactor is heme.

It localises to the endoplasmic reticulum membrane. Its subcellular location is the microsome membrane. It carries out the reaction an organic molecule + reduced [NADPH--hemoprotein reductase] + O2 = an alcohol + oxidized [NADPH--hemoprotein reductase] + H2O + H(+). The catalysed reaction is (5Z,8Z,11Z,14Z)-eicosatetraenoate + reduced [NADPH--hemoprotein reductase] + O2 = (8R,9S)-epoxy-(5Z,11Z,14Z)-eicosatrienoate + oxidized [NADPH--hemoprotein reductase] + H2O + H(+). It catalyses the reaction (5Z,8Z,11Z,14Z)-eicosatetraenoate + reduced [NADPH--hemoprotein reductase] + O2 = (8S,9R)-epoxy-(5Z,11Z,14Z)-eicosatrienoate + oxidized [NADPH--hemoprotein reductase] + H2O + H(+). The enzyme catalyses (5Z,8Z,11Z,14Z)-eicosatetraenoate + reduced [NADPH--hemoprotein reductase] + O2 = (11R,12S)-epoxy-(5Z,8Z,14Z)-eicosatrienoate + oxidized [NADPH--hemoprotein reductase] + H2O + H(+). It carries out the reaction (5Z,8Z,11Z,14Z)-eicosatetraenoate + reduced [NADPH--hemoprotein reductase] + O2 = (11S,12R)-epoxy-(5Z,8Z,14Z)-eicosatrienoate + oxidized [NADPH--hemoprotein reductase] + H2O + H(+). The catalysed reaction is (5Z,8Z,11Z,14Z)-eicosatetraenoate + reduced [NADPH--hemoprotein reductase] + O2 = (14R,15S)-epoxy-(5Z,8Z,11Z)-eicosatrienoate + oxidized [NADPH--hemoprotein reductase] + H2O + H(+). It catalyses the reaction (5Z,8Z,11Z,14Z)-eicosatetraenoate + reduced [NADPH--hemoprotein reductase] + O2 = (14S,15R)-epoxy-(5Z,8Z,11Z)-eicosatrienoate + oxidized [NADPH--hemoprotein reductase] + H2O + H(+). The enzyme catalyses (5Z,8Z,11Z,14Z,17Z)-eicosapentaenoate + reduced [NADPH--hemoprotein reductase] + O2 = 8,9-epoxy-(5Z,11Z,14Z,17Z)-eicosatetraenoate + oxidized [NADPH--hemoprotein reductase] + H2O + H(+). It carries out the reaction (5Z,8Z,11Z,14Z,17Z)-eicosapentaenoate + reduced [NADPH--hemoprotein reductase] + O2 = 11,12-epoxy-(5Z,8Z,14Z,17Z)-eicosatetraenoate + oxidized [NADPH--hemoprotein reductase] + H2O + H(+). The catalysed reaction is (5Z,8Z,11Z,14Z,17Z)-eicosapentaenoate + reduced [NADPH--hemoprotein reductase] + O2 = 14,15-epoxy-(5Z,8Z,11Z,17Z)-eicosatetraenoate + oxidized [NADPH--hemoprotein reductase] + H2O + H(+). It catalyses the reaction (5Z,8Z,11Z,14Z,17Z)-eicosapentaenoate + reduced [NADPH--hemoprotein reductase] + O2 = (17R,18S)-epoxy-(5Z,8Z,11Z,14Z)-eicosatetraenoate + oxidized [NADPH--hemoprotein reductase] + H2O + H(+). The enzyme catalyses cholesterol + reduced [NADPH--hemoprotein reductase] + O2 = 25-hydroxycholesterol + oxidized [NADPH--hemoprotein reductase] + H2O + H(+). It carries out the reaction 17beta-estradiol + reduced [NADPH--hemoprotein reductase] + O2 = 2-hydroxy-17beta-estradiol + oxidized [NADPH--hemoprotein reductase] + H2O + H(+). The catalysed reaction is estrone + reduced [NADPH--hemoprotein reductase] + O2 = 2-hydroxyestrone + oxidized [NADPH--hemoprotein reductase] + H2O + H(+). It catalyses the reaction (5Z,8Z,11Z,14Z)-eicosatetraenoate + reduced [NADPH--hemoprotein reductase] + O2 = (11R)-hydroxy-(5Z,8Z,12E,14Z)-eicosatetraenoate + oxidized [NADPH--hemoprotein reductase] + H2O + H(+). The enzyme catalyses (5Z,8Z,11Z,14Z)-eicosatetraenoate + reduced [NADPH--hemoprotein reductase] + O2 = (12R)-hydroxy-(5Z,8Z,10E,14Z)-eicosatetraenoate + oxidized [NADPH--hemoprotein reductase] + H2O + H(+). It carries out the reaction (5Z,8Z,11Z,14Z)-eicosatetraenoate + reduced [NADPH--hemoprotein reductase] + O2 = (15R)-hydroxy-(5Z,8Z,11Z,13E)-eicosatetraenoate + oxidized [NADPH--hemoprotein reductase] + H2O + H(+). The catalysed reaction is (5Z,8Z,11Z,14Z)-eicosatetraenoate + reduced [NADPH--hemoprotein reductase] + O2 = 10-hydroxy-(5Z,8Z,11Z,14Z)-eicosatetraenoate + oxidized [NADPH--hemoprotein reductase] + H2O + H(+). It catalyses the reaction (9Z,12Z)-octadecadienoate + reduced [NADPH--hemoprotein reductase] + O2 = (13R)-hydroxy-(9Z,11E)-octadecadienoate + oxidized [NADPH--hemoprotein reductase] + H2O + H(+). The enzyme catalyses (9Z,12Z)-octadecadienoate + reduced [NADPH--hemoprotein reductase] + O2 = (9R)-hydroxy-(10E,12Z)-octadecadienoate + oxidized [NADPH--hemoprotein reductase] + H2O + H(+). It carries out the reaction (5Z,8Z,11Z,14Z)-eicosatetraenoate + reduced [NADPH--hemoprotein reductase] + O2 = 19-hydroxy-(5Z,8Z,11Z,14Z)-eicosatetraenoate + oxidized [NADPH--hemoprotein reductase] + H2O + H(+). The catalysed reaction is (5Z,8Z,11Z,14Z)-eicosatetraenoate + reduced [NADPH--hemoprotein reductase] + O2 = 13(S)-hydroxy-(5Z,8Z,11Z,14Z)-eicosatetraenoate + oxidized [NADPH--hemoprotein reductase] + H2O + H(+). It catalyses the reaction (5Z,8Z,11Z,14Z)-eicosatetraenoate + reduced [NADPH--hemoprotein reductase] + O2 = 14,15-epoxy-(5Z,8Z,11Z)-eicosatrienoate + oxidized [NADPH--hemoprotein reductase] + H2O + H(+). The enzyme catalyses (5Z,8Z,11Z,14Z)-eicosatetraenoate + reduced [NADPH--hemoprotein reductase] + O2 = 11,12-epoxy-(5Z,8Z,14Z)-eicosatrienoate + oxidized [NADPH--hemoprotein reductase] + H2O + H(+). It carries out the reaction (5Z,8Z,11Z,14Z)-eicosatetraenoate + reduced [NADPH--hemoprotein reductase] + O2 = 13-hydroxy-(5Z,8Z,11Z,14Z)-eicosatetraenoate + oxidized [NADPH--hemoprotein reductase] + H2O + H(+). The catalysed reaction is (4R)-limonene + reduced [NADPH--hemoprotein reductase] + O2 = (1R,5S)-carveol + oxidized [NADPH--hemoprotein reductase] + H2O + H(+). It catalyses the reaction (4S)-limonene + reduced [NADPH--hemoprotein reductase] + O2 = (1S,5R)-carveol + oxidized [NADPH--hemoprotein reductase] + H2O + H(+). The enzyme catalyses (4S)-limonene + reduced [NADPH--hemoprotein reductase] + O2 = (4S)-perillyl alcohol + oxidized [NADPH--hemoprotein reductase] + H2O + H(+). The protein operates within lipid metabolism; arachidonate metabolism. It participates in steroid metabolism; cholesterol metabolism. Its pathway is terpene metabolism; (4R)-limonene degradation. Its function is as follows. A cytochrome P450 monooxygenase involved in the metabolism of various endogenous substrates, including fatty acids and steroids. Mechanistically, uses molecular oxygen inserting one oxygen atom into a substrate, and reducing the second into a water molecule, with two electrons provided by NADPH via cytochrome P450 reductase (NADPH--hemoprotein reductase). Catalyzes the epoxidation of double bonds of polyunsaturated fatty acids (PUFA). Catalyzes the hydroxylation of carbon-hydrogen bonds. Metabolizes cholesterol toward 25-hydroxycholesterol, a physiological regulator of cellular cholesterol homeostasis. Exhibits low catalytic activity for the formation of catechol estrogens from 17beta-estradiol (E2) and estrone (E1), namely 2-hydroxy E1 and E2. Catalyzes bisallylic hydroxylation and hydroxylation with double-bond migration of polyunsaturated fatty acids (PUFA). Also metabolizes plant monoterpenes such as limonene. Oxygenates (R)- and (S)-limonene to produce carveol and perillyl alcohol. Contributes to the wide pharmacokinetics variability of the metabolism of drugs such as S-warfarin, diclofenac, phenytoin, tolbutamide and losartan. This chain is Cytochrome P450 2C9, found in Homo sapiens (Human).